A 150-amino-acid polypeptide reads, in one-letter code: Galactose-binding lectin (150 aa).

2 residues coordinate D-galactose: His16 and Gly19. Asn26 carries an N-linked (GlcNAc...) asparagine glycan. Residues Asn27, 35–37 (DIH), His64, and Gly67 each bind D-galactose. Residue Asn74 is glycosylated (N-linked (GlcNAc...) asparagine). D-galactose-binding positions include Glu75, 83-85 (DRH), His108, and Gly111. Asn118 is a glycosylation site (N-linked (GlcNAc...) asparagine). D-galactose contacts are provided by residues Asn119 and 127–129 (DKH).

Monomer in solution. Homodimer in solution. Exists as a monomer in solution when a low concentration (0.001 mg/ml) of it is present. Homodimers start to appear at a concentration of 0.01 mg/ml and tetramers at a concentration of 0.1 mg/ml. As to expression, highly expressed in mantle and to a lesser extent in muscle, hepatopancreas, gill and hemocytes.

Its activity is regulated as follows. Bacterial binding activity is inhibited by D-galactose. Hemagglutinating activity is independent of divalent cations Ca2(+) or Mg2(+). It is strongly inhibited by N-acetyl-D-galactosamine (GalNAc), D-galactose and D-talose, and to a lesser extent by melibiose and raffinose. Also inhibited by glycoprotein asialo-bovine submaxillary mucin (BSM). Not inhibited by D-glucose, D-fucose, D-galactitol, N-acetyl-D-glucosamine or lactose. Fungal binding activity is inhibited by D-galactose. Cytotoxic activity against Raji cell line is completely inhibited by galactose, melibiose and raffinose, but not by glucose or lactose. Galactose inhibits binding to laminin and BSM, but not to collagen, gelatin or fibronectin. Its function is as follows. Galactose-binding lectin. Binds both alpha and beta anomer of galactose (Gal), but has a stronger interaction with the glycans having alpha Gal at the non-reducing end and binds beta Gal weakly only in highly branched glycans. Has high affinity to Galalpha1-4Galbeta1-4GlcNAc. Binds N-acetyl-2-deoxy-2-amino-galactose (2-deoxy-GalNAc). Binds N-acetylgalactosamine (GalNAc). Binds porcine stomach mucin (PSM) with high affinity. Binds galactosamine. Binds laminin, bovine submaxillary mucin (BSM), fibronectin, type I collagen and gelatin with a decreasing affinity, respectively. Has hemagglutinating activity towards human type A erythrocytes. Also hemagglutinates human type 0, B and AB erythrocytes as well as rabbit and mouse erythrocytes. Agglutinates both Gram-positive and Gram-negative bacteria including B.subtilis ATCC 6633, S.aureus ATCC 21027 and E.coli 3254, respectively. No agglutination activity towards Gram-positive S.amurskyense CMM 3673. Has bacteriostatic activity on S.amurskyense CMM 3673, B.subtilis ATCC 6633, S.aureus ATCC 21027 and E.coli 3254. However, has no agglutination nor bacteriostatic activity on Gram-negative C.scophthalmum CIP 104199 or A.troitsensis KMM 3674. Inhibits growth of fungi from the genera Aspergillus, Penicillium, Trichoderma and st. Mycelia. Inhibits germination of spores and hyphal growth of them. Has dose-dependent cytotoxic effect on the human globotriaosylceramide (Gb3)-expressing Burkitt's lymphoma (Raji) cell line. Binds to Gb3 in these cells leading to activation of caspase-9/3 and PARP. Has dose-dependent cytotoxic effect on the Gb3-expressing human MCF-7 breast cancer cell line. No cytotoxic effect on myelogenous leukemia K562 cell line, which does not express Gb3. Activates immune responses in mice and increases cytokine production of TNF-alpha, IL-6 and MCP-1 in the serum and the peritoneal lavage of mice. Induces TNF-alpha and IL-6 secretion in mouse RAW264.7 macrophages, mouse bone marrow-derived macrophages, human THP-1 macrophages, human peripheral blood mononuclear cells (PBMCs) and human blood monocyte-derived macrophages. TNF-alpha production in macrophages could not be inhibited by GalNAc, GalN or Gal, indicating that induced cytokine production is separate from its sugar binding activity. Increases intracellular reactive oxygen species levels, expression and phosphorylation of protein kinases PKC alpha/delta, expression of COX-2 and NF-kappaB, and activates the MAPK pathway by increasing the phosphorylation of ERK1/2, JNK1/2 and p38 in mouse RAW264.7 macrophages. Induces endotoxin tolerance in lipopolysaccharide(LPS)-activated macrophages by down-regulating IRAK2 expression, reducing JNK1/2 phosphorylation and NF-kappaB activation. Can slightly increase the bactericidal activity of RAW264.7 macrophages. Has DNA-binding activity. Recognizes pathogen-associated molecular patterns (PAMPs) and binds to LPS from E.coli, but has only little binding to beta-1,3-glucan from E.gracilis and peptidoglycan from S.aureus. Activates secretion of TNF-alpha and IFN-gamma by the human peripheral blood cells (HPBCs). May be involved in innate immunity acting as an antibacterial and antifungal agent involved in the recognition and clearance of pathogens. The polypeptide is Galactose-binding lectin (Crenomytilus grayanus (Gray mussel)).